Reading from the N-terminus, the 349-residue chain is Ethyl acetate hydrolase (349 aa).

One can recognise an AB hydrolase-1 domain in the interval 67 to 300 (YIGEGRALDP…SHDQFFTVDD (234 aa)). The active-site Nucleophile is serine 139. Residues aspartate 293 and histidine 322 contribute to the active site.

It belongs to the AB hydrolase superfamily. Acetyl esterase family. In terms of assembly, homodimer.

The enzyme catalyses ethyl acetate + H2O = ethanol + acetate + H(+). Its function is as follows. Esterase that catalyzes the hydrolysis of ethyl acetate. Involved in the degradation of short chain methyl ketones (MEK) such as 2-butanone and 2-hexanone. In vitro, can also hydrolyze vinyl acetate, 4-nitrophenyl acetate, methyl acetate, propyl acetate, benzyl acetate and methyl propionate. The highest activities are obtained with acetic acid esters, but the alcohol group also plays an important role, as compounds with two carbon atoms in the alcohol moiety, i.e., vinyl and ethyl acetate, are by far the preferred substrates. The sequence is that of Ethyl acetate hydrolase from Pseudomonas veronii.